Consider the following 102-residue polypeptide: Large ribosomal subunit protein mL63 (102 aa).

The protein belongs to the mitochondrion-specific ribosomal protein mL63 family.

The protein localises to the mitochondrion. This chain is Large ribosomal subunit protein mL63 (Mrpl57), found in Mus musculus (Mouse).